The following is a 373-amino-acid chain: GDP-mannose 4,6 dehydratase 2 (373 aa).

The span at 1–15 shows a compositional bias: polar residues; sequence MASENNGSRSDSESI. Residues 1–21 form a disordered region; it reads MASENNGSRSDSESITAPKAD. Residues 35–40, R60, 91–92, 113–117, and Y128 contribute to the NADP(+) site; these read GITGQD, DL, and LAAQS. S117 lines the substrate pocket. Residue S162 coordinates substrate. S162 is an active-site residue. Catalysis depends on nucleophile residues E164 and Y185. Position 185 (Y185) interacts with substrate. Residue K189 coordinates NADP(+). N214 contributes to the substrate binding site. H215 and R220 together coordinate NADP(+). Substrate is bound by residues 220-228, G247, R253, and 314-317; these read RGENFVTRK and RPAE.

It belongs to the NAD(P)-dependent epimerase/dehydratase family. GDP-mannose 4,6-dehydratase subfamily. Homotetramer. Binds to GER1. Requires NADP(+) as cofactor. In terms of tissue distribution, expressed in roots, flowers, siliques, leaves and stems. Not expressed in the root meristem and the proximal part of the elongation zone, or in emerging lateral roots. Expressed in trichomes and guard cells, and in pollen just before anthesis.

It catalyses the reaction GDP-alpha-D-mannose = GDP-4-dehydro-alpha-D-rhamnose + H2O. Its pathway is nucleotide-sugar biosynthesis; GDP-L-fucose biosynthesis via de novo pathway; GDP-L-fucose from GDP-alpha-D-mannose: step 1/2. In terms of biological role, catalyzes the conversion of GDP-D-mannose to GDP-4-dehydro-6-deoxy-D-mannose. This chain is GDP-mannose 4,6 dehydratase 2 (MUR1), found in Arabidopsis thaliana (Mouse-ear cress).